The primary structure comprises 182 residues: uncharacterized protein (182 aa).

The 128-residue stretch at 55-182 (VNLHDLEKLC…GVKGMFWYPL (128 aa)) folds into the N-acetyltransferase domain.

The protein belongs to the acetyltransferase family. Ycf52 subfamily.

The protein resides in the plastid. It localises to the chloroplast. This is an uncharacterized protein from Gracilaria tenuistipitata var. liui (Red alga).